An 888-amino-acid chain; its full sequence is DNA mismatch repair protein MutS (888 aa).

An ATP-binding site is contributed by 641–648 (GPNMAGKS).

Belongs to the DNA mismatch repair MutS family.

Its function is as follows. This protein is involved in the repair of mismatches in DNA. It is possible that it carries out the mismatch recognition step. This protein has a weak ATPase activity. The polypeptide is DNA mismatch repair protein MutS (Rickettsia bellii (strain OSU 85-389)).